A 22-amino-acid chain; its full sequence is Rothein 4.1 (22 aa).

This sequence belongs to the frog skin active peptide (FSAP) family. Rothein subfamily. In terms of tissue distribution, expressed by the skin dorsal glands.

The protein resides in the secreted. Its function is as follows. Lacks antimicrobial activity. Does not inhibit the formation of NO by neuronal nitric oxide. The chain is Rothein 4.1 from Litoria rothii (Roth's tree frog).